The chain runs to 466 residues: Soluble pyridine nucleotide transhydrogenase (466 aa).

36–45 is a binding site for FAD; that stretch reads ERYQNVGGGC.

This sequence belongs to the class-I pyridine nucleotide-disulfide oxidoreductase family. In terms of assembly, homooligomer; probable homooctamer. The cofactor is FAD.

The protein localises to the cytoplasm. It catalyses the reaction NAD(+) + NADPH = NADH + NADP(+). In terms of biological role, conversion of NADPH, generated by peripheral catabolic pathways, to NADH, which can enter the respiratory chain for energy generation. The chain is Soluble pyridine nucleotide transhydrogenase from Escherichia coli O157:H7.